We begin with the raw amino-acid sequence, 469 residues long: Probable NADPH:adrenodoxin oxidoreductase, mitochondrial (469 aa).

Residues 1 to 38 (MLSRFIKRTYSTQTSSPVVGIIGSGPAAFYTAHRLLRN) constitute a mitochondrion transit peptide. FAD-binding residues include alanine 27, glutamate 48, leucine 56, and valine 92. Residues 164–167 (HGNV), 208–209 (RR), and glutamate 220 each bind NADP(+). Residues tryptophan 375 and 382-384 (GVI) contribute to the FAD site. Glycine 382 contributes to the NADP(+) binding site.

Belongs to the ferredoxin--NADP reductase type 1 family. It depends on FAD as a cofactor.

The protein localises to the mitochondrion inner membrane. It carries out the reaction 2 reduced [adrenodoxin] + NADP(+) + H(+) = 2 oxidized [adrenodoxin] + NADPH. Adrenodoxin reductase transfers electrons from NADPH to adrenodoxin, which is involved in heme A biosynthesis and in iron-sulfur cluster assembly. Involved in the electron transfer to heme A synthase etp1(cd), a heme protein that catalyzes the conversion of heme O to heme A. Required for the de novo synthesis of Fe-S clusters on iron sulfur cluster assembly protein isu1. Involved in electron delivery for Fe-S cluster synthesis. Essential for coenzyme Q biosynthesis. May be involved in the electron transfer required for the hydroxylation reaction performed by coq6. May play a role in cellular and mitochondrial iron homeostasis. The chain is Probable NADPH:adrenodoxin oxidoreductase, mitochondrial (arh1) from Schizosaccharomyces pombe (strain 972 / ATCC 24843) (Fission yeast).